The following is a 498-amino-acid chain: ATP synthase subunit beta, chloroplastic (498 aa).

172–179 (GGAGVGKT) is an ATP binding site.

It belongs to the ATPase alpha/beta chains family. As to quaternary structure, F-type ATPases have 2 components, CF(1) - the catalytic core - and CF(0) - the membrane proton channel. CF(1) has five subunits: alpha(3), beta(3), gamma(1), delta(1), epsilon(1). CF(0) has four main subunits: a(1), b(1), b'(1) and c(9-12).

It is found in the plastid. The protein localises to the chloroplast thylakoid membrane. It carries out the reaction ATP + H2O + 4 H(+)(in) = ADP + phosphate + 5 H(+)(out). In terms of biological role, produces ATP from ADP in the presence of a proton gradient across the membrane. The catalytic sites are hosted primarily by the beta subunits. This chain is ATP synthase subunit beta, chloroplastic, found in Nandina domestica (Heavenly bamboo).